The following is a 1198-amino-acid chain: Tetratricopeptide repeat protein 17 (1198 aa).

Residues 295–328 (FTSYYTLGNIYAMLGEYNHSVLCYDHALQAKPGF) form a TPR 1 repeat. Positions 340-382 (CQQKLEQKLEAQHRSLQRTLNELKEYQKQHDHYLRQQEILEKH) form a coiled coil. TPR repeat units follow at residues 619–652 (WLIL…APVQ) and 689–722 (PLTF…STKC). Disordered stretches follow at residues 774-793 (LDAA…PVLS) and 902-954 (VKKP…YQSL). Over residues 902–914 (VKKPKGDHKKPPG) the composition is skewed to basic residues. TPR repeat units lie at residues 1071–1105 (SWVL…APHQ), 1108–1141 (DVPL…APHF), and 1142–1175 (AVNH…QPEF).

This sequence belongs to the TTC17 family. As to quaternary structure, interacts with CATIP.

The protein resides in the cytoplasm. Its subcellular location is the cell membrane. It is found in the cytoskeleton. Its function is as follows. Plays a role in primary ciliogenesis by modulating actin polymerization. The chain is Tetratricopeptide repeat protein 17 (Ttc17) from Mus musculus (Mouse).